The primary structure comprises 202 residues: Prohormone-4 (202 aa).

A signal peptide spans 1-28 (MVQRLCTSVAALSLALSACVFFPRAVMA). The 41-residue stretch at 46-86 (ACRPYEPFKCPGDDTCISIQYLCDGAPDCQDGYDEDSRLCT) folds into the LDL-receptor class A domain. Intrachain disulfides connect C47/C61, C55/C74, and C68/C85.

The protein localises to the secreted. The protein is Prohormone-4 of Apis mellifera (Honeybee).